The sequence spans 341 residues: MSFPYSLKSFNTFGVTQSCLSLIEVRSKAELQAICLPLYQSKQPMLVLGGGSNIVFTDDFNGTVVRVLSKGISVTEDVSYFYLEIEAGENWHELVEFTLNNHMAGLENLALIPGTVGAAPIQNIGAYGVELCDICHWVEYLDLDSGLLLRLSVDECEFSYRESIFKGRLRDKAVITAVGLRLPKTWQPRLAYGPLQSFAADTVTPRDIFERVCEVRSEKLPDPHILGNAGSFFKNPIISAAAYVELAQRFPNIVGYAQANGDVKLAAGWLIEHAGLKGFVLGNAGVHAKQALVLVNLGNATGQDICRLALHVIARVHDVFGVMLEAEPRIMGLNGETSLHV.

One can recognise an FAD-binding PCMH-type domain in the interval 15-185 (VTQSCLSLIE…TAVGLRLPKT (171 aa)). R161 is a catalytic residue. S231 (proton donor) is an active-site residue. Residue E327 is part of the active site.

The protein belongs to the MurB family. It depends on FAD as a cofactor.

It is found in the cytoplasm. The enzyme catalyses UDP-N-acetyl-alpha-D-muramate + NADP(+) = UDP-N-acetyl-3-O-(1-carboxyvinyl)-alpha-D-glucosamine + NADPH + H(+). It participates in cell wall biogenesis; peptidoglycan biosynthesis. Its function is as follows. Cell wall formation. This Shewanella oneidensis (strain ATCC 700550 / JCM 31522 / CIP 106686 / LMG 19005 / NCIMB 14063 / MR-1) protein is UDP-N-acetylenolpyruvoylglucosamine reductase.